The following is a 451-amino-acid chain: ACT domain-containing protein ACR4 (451 aa).

ACT domains follow at residues 35–118 (VIRV…VIPS), 123–200 (VIEL…NTPR), 259–335 (VVTV…VSEG), and 337–416 (KLEL…QEQQ). The disordered stretch occupies residues 409–428 (KNNPQEQQQRQKSPSHESPT). Residues 410–420 (NNPQEQQQRQK) show a composition bias toward polar residues.

As to expression, highly expressed in flowers and at lower levels in leaves and siliques.

In terms of biological role, may bind amino acids. The polypeptide is ACT domain-containing protein ACR4 (Arabidopsis thaliana (Mouse-ear cress)).